The chain runs to 134 residues: Transcription antitermination protein NusB (134 aa).

The protein belongs to the NusB family.

Functionally, involved in transcription antitermination. Required for transcription of ribosomal RNA (rRNA) genes. Binds specifically to the boxA antiterminator sequence of the ribosomal RNA (rrn) operons. This chain is Transcription antitermination protein NusB, found in Shewanella baltica (strain OS223).